Here is a 349-residue protein sequence, read N- to C-terminus: D-alanine--D-alanine ligase (349 aa).

Residues 132-335 form the ATP-grasp domain; that stretch reads KHVFEAVGVP…YSDLIEKLVD (204 aa). ATP is bound at residue 162–217; it reads VEKLEFPVFVKPANMGSSVGISKVDDLADLQPALSEAYKYDNRVVIEQGVDAREIE. 3 residues coordinate Mg(2+): aspartate 289, glutamate 302, and asparagine 304.

It belongs to the D-alanine--D-alanine ligase family. Mg(2+) is required as a cofactor. Requires Mn(2+) as cofactor.

The protein resides in the cytoplasm. The catalysed reaction is 2 D-alanine + ATP = D-alanyl-D-alanine + ADP + phosphate + H(+). It functions in the pathway cell wall biogenesis; peptidoglycan biosynthesis. Cell wall formation. The sequence is that of D-alanine--D-alanine ligase from Lactococcus lactis subsp. lactis (strain IL1403) (Streptococcus lactis).